The sequence spans 238 residues: Uridylate kinase (238 aa).

12 to 15 (KVSG) provides a ligand contact to ATP. G54 provides a ligand contact to UMP. Residues G55 and R59 each coordinate ATP. UMP contacts are provided by residues D74 and 135 to 142 (TGNPYFTT). ATP contacts are provided by T162, N163, Y168, and D171.

This sequence belongs to the UMP kinase family. As to quaternary structure, homohexamer.

The protein localises to the cytoplasm. It catalyses the reaction UMP + ATP = UDP + ADP. The protein operates within pyrimidine metabolism; CTP biosynthesis via de novo pathway; UDP from UMP (UMPK route): step 1/1. Its activity is regulated as follows. Inhibited by UTP. Functionally, catalyzes the reversible phosphorylation of UMP to UDP. The polypeptide is Uridylate kinase (Azorhizobium caulinodans (strain ATCC 43989 / DSM 5975 / JCM 20966 / LMG 6465 / NBRC 14845 / NCIMB 13405 / ORS 571)).